The following is a 140-amino-acid chain: MNQRLQRLGDQIQRELAVLIRDDVNDPRLTGFVTISSVKVSSDLGYADVYVTIMEPELNDAMSKHSHEESLKVLNKAAGFLRTELSHSLKTRTTPRLRFHYDEVTARGNYMMDLINKAVTKTEQTSADDDADRLDSEDRS.

The interval Lys-121–Ser-140 is disordered.

This sequence belongs to the RbfA family. Monomer. Binds 30S ribosomal subunits, but not 50S ribosomal subunits or 70S ribosomes.

It is found in the cytoplasm. In terms of biological role, one of several proteins that assist in the late maturation steps of the functional core of the 30S ribosomal subunit. Associates with free 30S ribosomal subunits (but not with 30S subunits that are part of 70S ribosomes or polysomes). Required for efficient processing of 16S rRNA. May interact with the 5'-terminal helix region of 16S rRNA. This Psychrobacter sp. (strain PRwf-1) protein is Ribosome-binding factor A.